The following is a 153-amino-acid chain: Small ribosomal subunit protein uS9 (153 aa).

A disordered region spans residues 122–153 (KKAGFLTRDPRSTERKKYGLKKARKAPQYSKR). Positions 129–138 (RDPRSTERKK) are enriched in basic and acidic residues. The span at 139–153 (YGLKKARKAPQYSKR) shows a compositional bias: basic residues.

It belongs to the universal ribosomal protein uS9 family.

The sequence is that of Small ribosomal subunit protein uS9 (rpsI) from Mycobacterium leprae (strain TN).